A 346-amino-acid polypeptide reads, in one-letter code: Small ribosomal subunit biogenesis GTPase RsgA (346 aa).

In terms of domain architecture, CP-type G spans 98–261 (VQGGRGPQLA…VIDTPGMRTL (164 aa)). GTP is bound by residues 148–151 (TKAD) and 200–208 (GSSGVGKST). Zn(2+)-binding residues include C284, C289, H291, and C297. Residues 317-346 (RKLSDENQHNTPVQSGPRGAKSPAGRGKRR) are disordered.

This sequence belongs to the TRAFAC class YlqF/YawG GTPase family. RsgA subfamily. Monomer. Associates with 30S ribosomal subunit, binds 16S rRNA. Zn(2+) serves as cofactor.

It is found in the cytoplasm. In terms of biological role, one of several proteins that assist in the late maturation steps of the functional core of the 30S ribosomal subunit. Helps release RbfA from mature subunits. May play a role in the assembly of ribosomal proteins into the subunit. Circularly permuted GTPase that catalyzes slow GTP hydrolysis, GTPase activity is stimulated by the 30S ribosomal subunit. The chain is Small ribosomal subunit biogenesis GTPase RsgA from Mesorhizobium japonicum (strain LMG 29417 / CECT 9101 / MAFF 303099) (Mesorhizobium loti (strain MAFF 303099)).